The chain runs to 93 residues: Phosphoribosyl-ATP pyrophosphatase (93 aa).

This sequence belongs to the PRA-PH family.

It is found in the cytoplasm. It carries out the reaction 1-(5-phospho-beta-D-ribosyl)-ATP + H2O = 1-(5-phospho-beta-D-ribosyl)-5'-AMP + diphosphate + H(+). It functions in the pathway amino-acid biosynthesis; L-histidine biosynthesis; L-histidine from 5-phospho-alpha-D-ribose 1-diphosphate: step 2/9. This chain is Phosphoribosyl-ATP pyrophosphatase, found in Mycolicibacterium smegmatis (strain ATCC 700084 / mc(2)155) (Mycobacterium smegmatis).